The sequence spans 832 residues: Protein wech (832 aa).

Residues 1 to 14 (MMELLSNNSVPQQM) are compositionally biased toward polar residues. The disordered stretch occupies residues 1–42 (MMELLSNNSVPQQMASSNAPSANNVAHSSTANGSGGGSVSSN). Over residues 15–32 (ASSNAPSANNVAHSSTAN) the composition is skewed to low complexity. S107 is modified (phosphoserine). 2 B box-type zinc fingers span residues 118 to 163 (NSSI…IVSL) and 184 to 224 (SGNF…YASI). Residues C123, C126, C145, H149, C189, H192, C211, and H216 each contribute to the Zn(2+) site. 3 positions are modified to phosphoserine: S470, S475, and S506. 5 NHL repeats span residues 537-580 (SLSF…FNPD), 584-627 (KFKF…FTAS), 631-674 (LLKF…FDSE), 680-722 (QIVF…IDPD), and 727-770 (LSVK…FNQN).

Interacts with the head domain of rhea and the kinase domain of Ilk. Interacts with AGO1. Interacts with mei-P26. Expressed in ovarian germline stem cells (at protein level). Expressed ubiquitously in all epithelial cells during early stages of embryogenesis. Specifically expressed at epidermal muscle attachment site.

Vital for larval development. Plays a role in tumor formation. A crucial component for the physical link between integrins and the cytoskeleton in the epidermal muscle attachment sites. The protein is Protein wech (wech) of Drosophila melanogaster (Fruit fly).